The chain runs to 242 residues: MNAWLTPDWPAPARVRACVTTRSGGVSQAPFDSLNLGAHVDDDPRAVEENRRRLTERLECRPSWLDQVHGVTVVEADPSRVLRADASWSAMPGVACTIMTADCLPALFCDRSGTRVAAAHAGWRGLAAGVLEATVDSLGVPGDELLVWLGPAIGPRAFEVGGEVRDAFVAAHAEARSAFVPSANPGRFMADIYRLARIRLGAHGVTAVHGGGFCTFSDTARFYSYRRSSRTGRFASLVWLQD.

Zn(2+)-binding residues include His-69, Cys-103, and His-120.

The protein belongs to the purine nucleoside phosphorylase YfiH/LACC1 family. Homodimer. The cofactor is Cu(2+). Zn(2+) serves as cofactor.

The catalysed reaction is adenosine + phosphate = alpha-D-ribose 1-phosphate + adenine. The enzyme catalyses S-methyl-5'-thioadenosine + phosphate = 5-(methylsulfanyl)-alpha-D-ribose 1-phosphate + adenine. It carries out the reaction inosine + phosphate = alpha-D-ribose 1-phosphate + hypoxanthine. It catalyses the reaction adenosine + H2O + H(+) = inosine + NH4(+). Its function is as follows. Purine nucleoside enzyme that catalyzes the phosphorolysis of adenosine and inosine nucleosides, yielding D-ribose 1-phosphate and the respective free bases, adenine and hypoxanthine. Also catalyzes the phosphorolysis of S-methyl-5'-thioadenosine into adenine and S-methyl-5-thio-alpha-D-ribose 1-phosphate. Also has adenosine deaminase activity. This is Purine nucleoside phosphorylase PA4543 from Pseudomonas aeruginosa (strain ATCC 15692 / DSM 22644 / CIP 104116 / JCM 14847 / LMG 12228 / 1C / PRS 101 / PAO1).